The following is a 220-amino-acid chain: UPF0502 protein Pnap_3223 (220 aa).

This sequence belongs to the UPF0502 family.

In Polaromonas naphthalenivorans (strain CJ2), this protein is UPF0502 protein Pnap_3223.